A 151-amino-acid chain; its full sequence is Small ribosomal subunit protein uS15 (151 aa).

The protein belongs to the universal ribosomal protein uS15 family.

In Zea mays (Maize), this protein is Small ribosomal subunit protein uS15 (RPS13).